Consider the following 187-residue polypeptide: UPF0398 protein LBA1157 (187 aa).

This sequence belongs to the UPF0398 family.

The sequence is that of UPF0398 protein LBA1157 from Lactobacillus acidophilus (strain ATCC 700396 / NCK56 / N2 / NCFM).